The sequence spans 74 residues: Large ribosomal subunit protein uL30 (74 aa).

This sequence belongs to the universal ribosomal protein uL30 family. In terms of assembly, part of the 50S ribosomal subunit.

This Koribacter versatilis (strain Ellin345) protein is Large ribosomal subunit protein uL30.